Here is a 407-residue protein sequence, read N- to C-terminus: Phosphopentomutase (407 aa).

Residues D10, D306, H311, D347, H348, and H359 each contribute to the Mn(2+) site.

The protein belongs to the phosphopentomutase family. It depends on Mn(2+) as a cofactor.

The protein resides in the cytoplasm. The catalysed reaction is 2-deoxy-alpha-D-ribose 1-phosphate = 2-deoxy-D-ribose 5-phosphate. It catalyses the reaction alpha-D-ribose 1-phosphate = D-ribose 5-phosphate. It participates in carbohydrate degradation; 2-deoxy-D-ribose 1-phosphate degradation; D-glyceraldehyde 3-phosphate and acetaldehyde from 2-deoxy-alpha-D-ribose 1-phosphate: step 1/2. Isomerase that catalyzes the conversion of deoxy-ribose 1-phosphate (dRib-1-P) and ribose 1-phosphate (Rib-1-P) to deoxy-ribose 5-phosphate (dRib-5-P) and ribose 5-phosphate (Rib-5-P), respectively. The sequence is that of Phosphopentomutase from Salmonella paratyphi C (strain RKS4594).